The following is a 1373-amino-acid chain: DNA-directed RNA polymerase subunit beta (1373 aa).

It belongs to the RNA polymerase beta chain family. In terms of assembly, the RNAP catalytic core consists of 2 alpha, 1 beta, 1 beta' and 1 omega subunit. When a sigma factor is associated with the core the holoenzyme is formed, which can initiate transcription.

The enzyme catalyses RNA(n) + a ribonucleoside 5'-triphosphate = RNA(n+1) + diphosphate. Functionally, DNA-dependent RNA polymerase catalyzes the transcription of DNA into RNA using the four ribonucleoside triphosphates as substrates. The chain is DNA-directed RNA polymerase subunit beta from Rhodopseudomonas palustris (strain BisB18).